The sequence spans 440 residues: UPF0489 protein C5orf22 homolog (440 aa).

The tract at residues 187-207 (VEGSSSGIQSSTSESSEDGLM) is disordered. Low complexity predominate over residues 188–200 (EGSSSGIQSSTSE).

This sequence belongs to the UPF0489 family.

This Xenopus tropicalis (Western clawed frog) protein is UPF0489 protein C5orf22 homolog.